We begin with the raw amino-acid sequence, 391 residues long: Xylose isomerase (391 aa).

Active-site residues include H54 and D57. Positions 181, 217, 220, 245, 255, 257, and 287 each coordinate Mg(2+).

It belongs to the xylose isomerase family. Homotetramer. Mg(2+) is required as a cofactor.

The protein localises to the cytoplasm. It carries out the reaction alpha-D-xylose = alpha-D-xylulofuranose. Involved in D-xylose catabolism. The protein is Xylose isomerase (xylA) of Streptomyces albus G.